An 83-amino-acid chain; its full sequence is Short neurotoxin C (83 aa).

The first 21 residues, 1–21 (MKTLLLTLVVVTMVCLDLAYT), serve as a signal peptide directing secretion. Intrachain disulfides connect Cys-24/Cys-45, Cys-38/Cys-62, Cys-64/Cys-75, and Cys-76/Cys-81.

This sequence belongs to the three-finger toxin family. Short-chain subfamily. Type I alpha-neurotoxin sub-subfamily. As to expression, expressed by the venom gland.

Its subcellular location is the secreted. Binds to muscle nicotinic acetylcholine receptor (nAChR) and inhibit acetylcholine from binding to the receptor, thereby impairing neuromuscular transmission. This is Short neurotoxin C from Laticauda colubrina (Yellow-lipped sea krait).